The sequence spans 163 residues: Ribosome maturation factor RimM (163 aa).

Positions 92 to 162 constitute a PRC barrel domain; it reads EDEFYVADLV…AGRAVVRPPE (71 aa).

This sequence belongs to the RimM family. Binds ribosomal protein uS19.

The protein resides in the cytoplasm. In terms of biological role, an accessory protein needed during the final step in the assembly of 30S ribosomal subunit, possibly for assembly of the head region. Essential for efficient processing of 16S rRNA. May be needed both before and after RbfA during the maturation of 16S rRNA. It has affinity for free ribosomal 30S subunits but not for 70S ribosomes. This Rubrobacter xylanophilus (strain DSM 9941 / JCM 11954 / NBRC 16129 / PRD-1) protein is Ribosome maturation factor RimM.